We begin with the raw amino-acid sequence, 757 residues long: Ecdysone receptor (757 aa).

The tract at residues 1–300 (MMKRRWSNNG…GPAPRLQEEL (300 aa)) is modulating. Disordered stretches follow at residues 126–192 (NSVG…GGGG) and 235–289 (LNHH…KKIK). Over residues 128-138 (VGGGGGGGGVP) the composition is skewed to gly residues. Residues 167-183 (NSNSNHSNSSSHHTNGH) show a composition bias toward low complexity. NR C4-type zinc fingers lie at residues 301–321 (CLVC…CEGC) and 337–361 (CKFG…LKKC). The nuclear receptor DNA-binding region spans 301-373 (CLVCGDRASG…VGMRPECVVP (73 aa)). In terms of domain architecture, NR LBD spans 442 to 677 (NQLAVIYKLI…FLEEIWDVHA (236 aa)). Low complexity predominate over residues 717 to 734 (TSMATSSSSSLSPSAAST). The disordered stretch occupies residues 717-739 (TSMATSSSSSLSPSAASTPNGGA).

This sequence belongs to the nuclear hormone receptor family. NR1 subfamily.

The protein localises to the nucleus. Its function is as follows. Receptor for ecdysone. Binds to ecdysone response elements (ECRES). This chain is Ecdysone receptor (EcR), found in Lucilia cuprina (Green bottle fly).